A 251-amino-acid chain; its full sequence is uncharacterized protein (251 aa).

Disordered stretches follow at residues 1 to 92 and 137 to 251; these read MGRP…PGSA and KPTP…LRTH. The span at 69–92 shows a compositional bias: low complexity; that stretch reads AEGAPALLGGSPSSGSPGHPPGSA. The segment covering 155 to 172 has biased composition (polar residues); sequence SESSWQLPQLPAGSTSGS.

This is an uncharacterized protein from Homo sapiens (Human).